Here is an 864-residue protein sequence, read N- to C-terminus: DNA double-strand break repair Rad50 ATPase (864 aa).

ATP is bound by residues 32 to 38 (NGAGKSS) and glutamine 131. Coiled coils occupy residues 176–319 (RELD…EKAI) and 376–413 (DIDK…EKNE). The 99-residue stretch at 380 to 478 (VNSLEQKVEE…ELNKIEREYR (99 aa)) folds into the Zinc-hook domain. Residues cysteine 426 and cysteine 429 each contribute to the Zn(2+) site. Residues 440–697 (KIIKEAKSYI…DREKIINAIN (258 aa)) are a coiled coil.

This sequence belongs to the SMC family. RAD50 subfamily. In terms of assembly, homodimer. Forms a heterotetramer composed of two Mre11 subunits and two Rad50 subunits. It depends on Zn(2+) as a cofactor.

In terms of biological role, part of the Rad50/Mre11 complex, which is involved in the early steps of DNA double-strand break (DSB) repair. The complex may facilitate opening of the processed DNA ends to aid in the recruitment of HerA and NurA. Rad50 controls the balance between DNA end bridging and DNA resection via ATP-dependent structural rearrangements of the Rad50/Mre11 complex. This chain is DNA double-strand break repair Rad50 ATPase, found in Saccharolobus solfataricus (strain ATCC 35092 / DSM 1617 / JCM 11322 / P2) (Sulfolobus solfataricus).